A 104-amino-acid polypeptide reads, in one-letter code: Large ribosomal subunit protein uL23 (104 aa).

The protein belongs to the universal ribosomal protein uL23 family. As to quaternary structure, part of the 50S ribosomal subunit. Contacts protein L29, and trigger factor when it is bound to the ribosome.

Its function is as follows. One of the early assembly proteins it binds 23S rRNA. One of the proteins that surrounds the polypeptide exit tunnel on the outside of the ribosome. Forms the main docking site for trigger factor binding to the ribosome. In Polynucleobacter necessarius subsp. necessarius (strain STIR1), this protein is Large ribosomal subunit protein uL23.